We begin with the raw amino-acid sequence, 117 residues long: Protein RALF-like 27 (117 aa).

Residues 1–27 (MTKTFFSFSFFFTSSLLLLLAATSATA) form the signal peptide. Residues 28–71 (STGNVTSGLRYDGCAPGDTVGECITATVEEEDEEGVEAVVRRIL) constitute a propeptide, removed in mature form. Asparagine 31 carries an N-linked (GlcNAc...) asparagine glycan. 2 disulfide bridges follow: cysteine 88/cysteine 96 and cysteine 107/cysteine 113.

This sequence belongs to the plant rapid alkalinization factor (RALF) family.

It is found in the secreted. Its function is as follows. Cell signaling peptide that may regulate plant stress, growth, and development. Mediates a rapid alkalinization of extracellular space by mediating a transient increase in the cytoplasmic Ca(2+) concentration leading to a calcium-dependent signaling events through a cell surface receptor and a concomitant activation of some intracellular mitogen-activated protein kinases. The protein is Protein RALF-like 27 (RALFL27) of Arabidopsis thaliana (Mouse-ear cress).